The following is a 429-amino-acid chain: Carboxypeptidase B (429 aa).

The N-terminal stretch at 1-15 (MKFLLVLALCAVVYA) is a signal peptide. The 303-residue stretch at 121-423 (NYQELEVIDE…EGIVVGARRA (303 aa)) folds into the Peptidase M14 domain. Zn(2+)-binding residues include His182 and Glu185. Substrate contacts are provided by residues 182 to 185 (HARE), Arg236, and 256 to 257 (NR). A disulfide bridge connects residues Cys250 and Cys273. Zn(2+) is bound at residue His309. Substrate contacts are provided by residues 310–311 (SF) and Tyr365. Glu387 acts as the Proton donor/acceptor in catalysis.

The protein belongs to the peptidase M14 family. The cofactor is Zn(2+).

The protein localises to the secreted. It catalyses the reaction Preferential release of a C-terminal lysine or arginine amino acid.. Its activity is regulated as follows. Highly resistant to inhibition by potato carboxypeptidase inhibitor (PCI). Moderately inhibited by leech carboxypeptidase inhibitor (LCI) and tick carboxypeptidase inhibitor (TCI). Its function is as follows. Metalloprotease which cleaves a single amino acid from the C-terminal end of polypeptide chains. Shows a strong preference for peptides with a terminal lysine residue. The protein is Carboxypeptidase B of Helicoverpa zea (Corn earworm moth).